A 247-amino-acid polypeptide reads, in one-letter code: Histone acetyltransferase MCC1 (247 aa).

Positions 25–198 (IHYRPINPND…DAFLFVYFIN (174 aa)) constitute an N-acetyltransferase domain.

Belongs to the acetyltransferase family.

It carries out the reaction L-lysyl-[protein] + acetyl-CoA = N(6)-acetyl-L-lysyl-[protein] + CoA + H(+). Its function is as follows. Histone acetyltransferase that probably regulates acetylation status of histone H3 during meiosis. Histone acetylation may influence recombination and chromosome segregation. This chain is Histone acetyltransferase MCC1 (MCC1), found in Arabidopsis thaliana (Mouse-ear cress).